A 1320-amino-acid chain; its full sequence is Myopalladin (1320 aa).

Residues 1–522 form an interaction with CARP region; it reads MQDDSIEAST…FTCTASNKYG (522 aa). 3 disordered regions span residues 19-68, 84-145, and 165-271; these read SYLA…AFLS, NYDP…SETQ, and FKSH…PPRF. Composition is skewed to basic and acidic residues over residues 23-35 and 87-106; these read ETRH…RSRA and PLEK…DQMK. S101 carries the post-translational modification Phosphoserine. Residues 107 to 130 show a composition bias toward polar residues; that stretch reads HSPNLSFEPNFCQDNPRSPTSSKE. S131 is modified (phosphoserine). Basic residues predominate over residues 168–182; it reads HSSKRIRPRACKNHK. Polar residues predominate over residues 186–201; sequence ESQNKVMQENSSSFSD. The span at 218–239 shows a compositional bias: basic and acidic residues; the sequence is DTRDNEVNHALEQQEAKRREAE. A coiled-coil region spans residues 219–248; the sequence is TRDNEVNHALEQQEAKRREAEQAASEAAGG. Low complexity predominate over residues 240–258; sequence QAASEAAGGDTTPGSSPSS. Position 251 is a phosphothreonine (T251). 2 consecutive Ig-like domains span residues 269–359 and 435–531; these read PRFT…IYIE and PVFT…AQLH. Intrachain disulfides connect C290/C341 and C456/C515. Positions 554–655 are disordered; that stretch reads AAIEPQPSPP…VKEPPPVLAK (102 aa). Residues 559 to 575 are compositionally biased toward pro residues; that stretch reads QPSPPHSEPPSVEQPPK. S644 is modified (phosphoserine). The tract at residues 649 to 677 is interaction with NEB; the sequence is PPPVLAKPKLDSTQLQQLHNQVLLEQHQL. S759 is subject to Phosphoserine. The tract at residues 763-805 is disordered; sequence LLVSHPSVQTKSPGGLSIQNEPLPPGPTEPTPPPFTFSIPSGN. Residues 768–782 show a composition bias toward polar residues; sequence PSVQTKSPGGLSIQN. Residues 784–797 show a composition bias toward pro residues; it reads PLPPGPTEPTPPPF. Residues S813, S818, S867, S907, and S928 each carry the phosphoserine modification. Residues 844–876 form a disordered region; the sequence is NAMGLPRSAPSMPSQGLAKKNTKSPQPVNDDNI. Ig-like domains lie at 945-1029, 1073-1162, and 1172-1262; these read PIFD…GRIS, PHFL…LELS, and PVIL…ARLD. Residues 945–1320 are interaction with ACTN; the sequence is PIFDKRLKHF…SRSVVESDEL (376 aa). An intrachain disulfide couples C1094 to C1146.

The protein belongs to the myotilin/palladin family. In terms of assembly, interacts with TTN/titin, NEB, NEBL, ACTN2 and CARP. As to expression, expressed in adult skeletal muscle and fetal heart.

The protein resides in the cytoplasm. Its subcellular location is the nucleus. It localises to the myofibril. It is found in the sarcomere. The protein localises to the z line. Functionally, component of the sarcomere that tethers together nebulin (skeletal muscle) and nebulette (cardiac muscle) to alpha-actinin, at the Z lines. This Homo sapiens (Human) protein is Myopalladin (MYPN).